The sequence spans 249 residues: 3alpha-hydroxy bile acid-CoA-ester 3-dehydrogenase 2 (249 aa).

NAD(+) contacts are provided by residues 15–18, E38, E42, and N92; that span reads TRGI. S144 serves as a coordination point for substrate. Catalysis depends on proton donor/acceptor residues Y157 and K161. NAD(+) is bound by residues K161 and 190 to 192; that span reads VNT.

This sequence belongs to the short-chain dehydrogenases/reductases (SDR) family. In terms of assembly, homotetramer.

It catalyses the reaction a 3alpha-hydroxy bile acid CoA + NAD(+) = a 3-oxo bile acid CoA + NADH + H(+). It carries out the reaction choloyl-CoA + NAD(+) = 7alpha,12alpha-dihydroxy-3-oxochol-24-oyl-CoA + NADH + H(+). The enzyme catalyses chenodeoxycholoyl-CoA + NAD(+) = 7alpha-hydroxy-3-oxochol-24-oyl-CoA + NADH + H(+). The catalysed reaction is deoxycholoyl-CoA + NAD(+) = 12alpha-hydroxy-3-oxocholan-24-oyl-CoA + NADH + H(+). It catalyses the reaction lithocholoyl-CoA + NAD(+) = 3-oxocholan-24-oyl-CoA + NADH + H(+). The protein operates within lipid metabolism; bile acid biosynthesis. In terms of biological role, involved in the multi-step bile acid 7alpha-dehydroxylation pathway that transforms primary bile acids to secondary bile acids in the human gut. Catalyzes the oxidation of C3-hydroxyl group of CoA conjugated bile acids generating a C3-oxo bile acid intermediate. Can use choloyl-CoA, chenodeoxycholoyl-CoA, deoxycholoyl-CoA, and lithocholoyl-CoA as substrates with similar efficiency. Highly prefers NAD over NADP as cosubstrate. Also catalyzes the reverse reactions; in vitro, the preferred direction of reaction depends on the pH. Has very little activity with unconjugated (non-CoA) bile acid substrates. This chain is 3alpha-hydroxy bile acid-CoA-ester 3-dehydrogenase 2 (baiA2), found in Clostridium scindens (strain JCM 10418 / VPI 12708).